The primary structure comprises 84 residues: Putative antitoxin VapB7 (84 aa).

Its function is as follows. Antitoxin component of a possible type II toxin-antitoxin (TA) system. The cognate toxin is VapC7. The protein is Putative antitoxin VapB7 (vapB7) of Mycobacterium tuberculosis (strain ATCC 25618 / H37Rv).